The chain runs to 453 residues: Ribosomal protein uS12 methylthiotransferase RimO (453 aa).

The 116-residue stretch at 5 to 120 (PKVGFVSLGC…VMQAVHSHLP (116 aa)) folds into the MTTase N-terminal domain. Positions 14, 50, 79, 151, 155, and 158 each coordinate [4Fe-4S] cluster. The Radical SAM core domain maps to 137 to 382 (LTPRHYAYLK…MEVAEEVSAN (246 aa)). Residues 385 to 453 (QRKIGKTLKV…ADGHDLWGEV (69 aa)) enclose the TRAM domain.

The protein belongs to the methylthiotransferase family. RimO subfamily. [4Fe-4S] cluster is required as a cofactor.

The protein resides in the cytoplasm. It catalyses the reaction L-aspartate(89)-[ribosomal protein uS12]-hydrogen + (sulfur carrier)-SH + AH2 + 2 S-adenosyl-L-methionine = 3-methylsulfanyl-L-aspartate(89)-[ribosomal protein uS12]-hydrogen + (sulfur carrier)-H + 5'-deoxyadenosine + L-methionine + A + S-adenosyl-L-homocysteine + 2 H(+). Catalyzes the methylthiolation of an aspartic acid residue of ribosomal protein uS12. The protein is Ribosomal protein uS12 methylthiotransferase RimO of Burkholderia orbicola (strain MC0-3).